Reading from the N-terminus, the 756-residue chain is Neutral ceramidase (756 aa).

The Cytoplasmic segment spans residues 1–11; it reads MAKRTFSTLEA. A helical; Signal-anchor for type II membrane protein transmembrane segment spans residues 12-32; that stretch reads FLIFLLVIMTVITVALLTLLF. Over 33 to 756 the chain is Lumenal; sequence VTSGTIENHK…ISSPFEVVTT (724 aa). O-linked (GalNAc...) threonine glycosylation is found at threonine 56, threonine 57, threonine 58, and threonine 64. Ca(2+) is bound at residue leucine 110. Residue histidine 170 coordinates Zn(2+). A glycan (N-linked (GlcNAc...) asparagine) is linked at asparagine 193. Position 279 (histidine 279) interacts with Zn(2+). Residue serine 330 is the Nucleophile of the active site. 2 disulfides stabilise this stretch: cysteine 338/cysteine 352 and cysteine 345/cysteine 360. 2 N-linked (GlcNAc...) asparagine glycosylation sites follow: asparagine 407 and asparagine 444. Cysteine 424 and cysteine 474 are joined by a disulfide. 2 residues coordinate Zn(2+): glutamate 516 and tyrosine 555. Aspartate 688, serine 690, and threonine 693 together coordinate Ca(2+). Residues 746-756 form a required for correct folding and localization region; it reads GISSPFEVVTT.

It belongs to the neutral ceramidase family. As to quaternary structure, may interact with CAV1. It depends on Zn(2+) as a cofactor. In terms of processing, proteolytic cleavage of the N-terminus removes the signal-anchor and produces a soluble form of the protein. N-glycosylated. Required for enzyme activity. Post-translationally, O-glycosylated. Required to retain it as a type II membrane protein at the cell surface. In terms of processing, phosphorylated. May prevent ubiquitination and subsequent degradation. Ubiquitinated, leading to its degradation by the proteasome. Ubiquitination is triggered by nitric oxide. In terms of tissue distribution, widely expressed. Strongly expressed in small intestine and to a lower extent in liver and kidney. Highly expressed in duodenum, jejunum and ileum along the brush border of the small intestine (at protein level).

It is found in the cell membrane. The protein localises to the membrane raft. The protein resides in the membrane. It localises to the caveola. Its subcellular location is the golgi apparatus membrane. It is found in the mitochondrion. The protein localises to the secreted. The protein resides in the extracellular exosome. The enzyme catalyses an N-acylsphing-4-enine + H2O = sphing-4-enine + a fatty acid. The catalysed reaction is N-hexadecanoylsphing-4-enine + H2O = sphing-4-enine + hexadecanoate. It catalyses the reaction N-dodecanoylsphing-4-enine + H2O = dodecanoate + sphing-4-enine. It carries out the reaction N-octadecanoylsphing-4-enine + H2O = sphing-4-enine + octadecanoate. The enzyme catalyses N-octanoylsphing-4-enine + H2O = octanoate + sphing-4-enine. The catalysed reaction is N-(hexanoyl)sphing-4-enine + H2O = hexanoate + sphing-4-enine. It catalyses the reaction N-tetradecanoylsphing-4-enine + H2O = tetradecanoate + sphing-4-enine. It carries out the reaction N-(9Z-octadecenoyl)-sphing-4-enine + H2O = sphing-4-enine + (9Z)-octadecenoate. The enzyme catalyses N-(15Z-tetracosenoyl)-sphing-4-enine + H2O = (15Z)-tetracosenoate + sphing-4-enine. The catalysed reaction is sphinganine + hexadecanoate = N-hexadecanoylsphinganine + H2O. It catalyses the reaction N-(octadecanoyl)-sphinganine + H2O = sphinganine + octadecanoate. It functions in the pathway lipid metabolism; sphingolipid metabolism. With respect to regulation, inhibited by D-erythro-MAPP. In terms of biological role, plasma membrane ceramidase that hydrolyzes sphingolipid ceramides into sphingosine and free fatty acids at neutral pH. Ceramides, sphingosine, and its phosphorylated form sphingosine-1-phosphate are bioactive lipids that mediate cellular signaling pathways regulating several biological processes including cell proliferation, apoptosis and differentiation. Also catalyzes the reverse reaction allowing the synthesis of ceramides from fatty acids and sphingosine. Together with sphingomyelinase, participates in the production of sphingosine and sphingosine-1-phosphate from the degradation of sphingomyelin, a sphingolipid enriched in the plasma membrane of cells. Also participates in the hydrolysis of ceramides from the extracellular milieu allowing the production of sphingosine-1-phosphate inside and outside cells. This is the case for instance with the digestion of dietary sphingolipids in the intestinal tract. The protein is Neutral ceramidase (Asah2) of Mus musculus (Mouse).